Consider the following 702-residue polypeptide: Polyribonucleotide nucleotidyltransferase (702 aa).

Asp-484 and Asp-490 together coordinate Mg(2+). In terms of domain architecture, KH spans 551 to 610 (PHIESFKIAVEKIGALIGPGGKTVKSLSDQYRVTINTDSDGTVTVSGRDAQSVFDAKVAV). The 69-residue stretch at 620–688 (GRVYQGVVKR…RMGRLNLSYI (69 aa)) folds into the S1 motif domain.

It belongs to the polyribonucleotide nucleotidyltransferase family. Mg(2+) serves as cofactor.

It localises to the cytoplasm. It carries out the reaction RNA(n+1) + phosphate = RNA(n) + a ribonucleoside 5'-diphosphate. Its function is as follows. Involved in mRNA degradation. Catalyzes the phosphorolysis of single-stranded polyribonucleotides processively in the 3'- to 5'-direction. This Treponema pallidum (strain Nichols) protein is Polyribonucleotide nucleotidyltransferase.